Reading from the N-terminus, the 589-residue chain is Proline--tRNA ligase (589 aa).

This sequence belongs to the class-II aminoacyl-tRNA synthetase family. ProS type 1 subfamily. In terms of assembly, homodimer.

The protein resides in the cytoplasm. It carries out the reaction tRNA(Pro) + L-proline + ATP = L-prolyl-tRNA(Pro) + AMP + diphosphate. Catalyzes the attachment of proline to tRNA(Pro) in a two-step reaction: proline is first activated by ATP to form Pro-AMP and then transferred to the acceptor end of tRNA(Pro). As ProRS can inadvertently accommodate and process non-cognate amino acids such as alanine and cysteine, to avoid such errors it has two additional distinct editing activities against alanine. One activity is designated as 'pretransfer' editing and involves the tRNA(Pro)-independent hydrolysis of activated Ala-AMP. The other activity is designated 'posttransfer' editing and involves deacylation of mischarged Ala-tRNA(Pro). The misacylated Cys-tRNA(Pro) is not edited by ProRS. This chain is Proline--tRNA ligase, found in Corynebacterium aurimucosum (strain ATCC 700975 / DSM 44827 / CIP 107346 / CN-1) (Corynebacterium nigricans).